Here is a 317-residue protein sequence, read N- to C-terminus: Retinol dehydrogenase 16 (317 aa).

33 to 57 (FITGCDSGFGNLLARQLDRRGMRVL) is a binding site for NAD(+). Serine 164 lines the substrate pocket. The active-site Proton acceptor is the tyrosine 176. The chain crosses the membrane as a helical span at residues 289 to 308 (FFYLPMSYLPTFLVDALFYW).

It belongs to the short-chain dehydrogenases/reductases (SDR) family. In terms of assembly, homodimer. In terms of processing, not N-glycosylated. Liver &gt; kidney &gt; brain &gt; lung &gt; testis.

It is found in the microsome membrane. It localises to the endoplasmic reticulum membrane. The enzyme catalyses all-trans-retinol--[retinol-binding protein] + NAD(+) = all-trans-retinal--[retinol-binding protein] + NADH + H(+). It carries out the reaction all-trans-retinol + NAD(+) = all-trans-retinal + NADH + H(+). The catalysed reaction is 13-cis-retinol + NAD(+) = 13-cis-retinal + NADH + H(+). It catalyses the reaction 11-cis-retinol + NAD(+) = 11-cis-retinal + NADH + H(+). The enzyme catalyses 9-cis-retinol + NAD(+) = 9-cis-retinal + NADH + H(+). It carries out the reaction 5alpha-androstane-3alpha,17beta-diol + NAD(+) = 17beta-hydroxy-5alpha-androstan-3-one + NADH + H(+). The catalysed reaction is androsterone + NAD(+) = 5alpha-androstan-3,17-dione + NADH + H(+). The protein operates within cofactor metabolism; retinol metabolism. Its function is as follows. Oxidoreductase with a preference for NAD. Oxidizes all-trans-retinol, 9-cis-retinol, 11-cis-retinol and 13-cis-retinol to the corresponding aldehydes. Has higher activity towards CRBP-bound retinol than with free retinol. Oxidizes 3-alpha-hydroxysteroids. Oxidizes androstanediol and androsterone to dihydrotestosterone and androstanedione. Can also catalyze the reverse reaction. The protein is Retinol dehydrogenase 16 of Rattus norvegicus (Rat).